Consider the following 179-residue polypeptide: Transcription factor E (179 aa).

The region spanning 1 to 102 is the HTH TFE/IIEalpha-type domain; sequence MAKKKVKYTF…YWRFDSRKAA (102 aa).

This sequence belongs to the TFE family. In terms of assembly, monomer. Interaction with RNA polymerase subunits RpoF and RpoE is necessary for Tfe stimulatory transcription activity. Able to interact with Tbp and RNA polymerase in the absence of DNA promoter. Interacts both with the preinitiation and elongation complexes.

Functionally, transcription factor that plays a role in the activation of archaeal genes transcribed by RNA polymerase. Facilitates transcription initiation by enhancing TATA-box recognition by TATA-box-binding protein (Tbp), and transcription factor B (Tfb) and RNA polymerase recruitment. Not absolutely required for transcription in vitro, but particularly important in cases where Tbp or Tfb function is not optimal. It dynamically alters the nucleic acid-binding properties of RNA polymerases by stabilizing the initiation complex and destabilizing elongation complexes. Seems to translocate with the RNA polymerase following initiation and acts by binding to the non template strand of the transcription bubble in elongation complexes. The protein is Transcription factor E of Methanosphaera stadtmanae (strain ATCC 43021 / DSM 3091 / JCM 11832 / MCB-3).